A 1102-amino-acid chain; its full sequence is DNA-directed RNA polymerase subunit beta (1102 aa).

A disordered region spans residues 1081–1102; sequence LPGKRTPSRPIYESLSTEGNQD.

Belongs to the RNA polymerase beta chain family. In terms of assembly, in cyanobacteria the RNAP catalytic core is composed of 2 alpha, 1 beta, 1 beta', 1 gamma and 1 omega subunit. When a sigma factor is associated with the core the holoenzyme is formed, which can initiate transcription.

It catalyses the reaction RNA(n) + a ribonucleoside 5'-triphosphate = RNA(n+1) + diphosphate. Its function is as follows. DNA-dependent RNA polymerase catalyzes the transcription of DNA into RNA using the four ribonucleoside triphosphates as substrates. This is DNA-directed RNA polymerase subunit beta from Trichodesmium erythraeum (strain IMS101).